The following is a 443-amino-acid chain: ATP-dependent protease ATPase subunit HslU (443 aa).

Residues Ile-18, 60–65 (GVGKTE), Asp-256, Glu-321, and Arg-393 contribute to the ATP site.

Belongs to the ClpX chaperone family. HslU subfamily. A double ring-shaped homohexamer of HslV is capped on each side by a ring-shaped HslU homohexamer. The assembly of the HslU/HslV complex is dependent on binding of ATP.

The protein resides in the cytoplasm. In terms of biological role, ATPase subunit of a proteasome-like degradation complex; this subunit has chaperone activity. The binding of ATP and its subsequent hydrolysis by HslU are essential for unfolding of protein substrates subsequently hydrolyzed by HslV. HslU recognizes the N-terminal part of its protein substrates and unfolds these before they are guided to HslV for hydrolysis. This is ATP-dependent protease ATPase subunit HslU from Vibrio cholerae serotype O1 (strain ATCC 39315 / El Tor Inaba N16961).